We begin with the raw amino-acid sequence, 314 residues long: tRNA-cytidine(32) 2-sulfurtransferase (314 aa).

Residues 53-58 (SGGKDS) carry the PP-loop motif motif. Residues Cys128, Cys131, and Cys219 each coordinate [4Fe-4S] cluster.

Belongs to the TtcA family. In terms of assembly, homodimer. Mg(2+) is required as a cofactor. [4Fe-4S] cluster serves as cofactor.

It localises to the cytoplasm. It carries out the reaction cytidine(32) in tRNA + S-sulfanyl-L-cysteinyl-[cysteine desulfurase] + AH2 + ATP = 2-thiocytidine(32) in tRNA + L-cysteinyl-[cysteine desulfurase] + A + AMP + diphosphate + H(+). It functions in the pathway tRNA modification. Catalyzes the ATP-dependent 2-thiolation of cytidine in position 32 of tRNA, to form 2-thiocytidine (s(2)C32). The sulfur atoms are provided by the cysteine/cysteine desulfurase (IscS) system. This is tRNA-cytidine(32) 2-sulfurtransferase from Colwellia psychrerythraea (strain 34H / ATCC BAA-681) (Vibrio psychroerythus).